The sequence spans 288 residues: Store-operated calcium entry regulator STIMATE (288 aa).

At 1 to 28 (MQGPGGNVSRGLPGGPASTVASGAGRCE) the chain is on the cytoplasmic side. 3 helical membrane passes run 29 to 49 (SGAL…VVAF), 69 to 89 (IWFL…FANV), and 102 to 122 (LYLI…YVGV). The GXXXG motif signature appears at 149–153 (GAWVG). The next 2 membrane-spanning stretches (helical) occupy residues 156–176 (ALYI…LLIL) and 194–214 (LAIV…WVVD). At 215 to 288 (NFLMRKGKTK…KKKHRFGLPV (74 aa)) the chain is on the cytoplasmic side. Residues 228–288 (EERGANQDSR…KKKHRFGLPV (61 aa)) form a disordered region. Residues 241-246 (KVRYRR) are required for localization in the endoplasmic reticulum. A compositionally biased stretch (acidic residues) spans 261 to 272 (ADDEMEESDAEE). Over residues 277 to 288 (PVKKKHRFGLPV) the composition is skewed to basic residues.

The protein belongs to the STIMATE family. As to quaternary structure, homooligomer. Interacts with STIM1.

It is found in the endoplasmic reticulum membrane. Acts as a regulator of store-operated Ca(2+) entry (SOCE) at junctional sites that connect the endoplasmic reticulum (ER) and plasma membrane (PM), called ER-plasma membrane (ER-PM) junction or cortical ER. SOCE is a Ca(2+) influx following depletion of intracellular Ca(2+) stores. Acts by interacting with STIM1, promoting STIM1 conformational switch. Involved in STIM1 relocalization to ER-PM junctions. Contributes to the maintenance and reorganization of store-dependent ER-PM junctions. The protein is Store-operated calcium entry regulator STIMATE of Rattus norvegicus (Rat).